The following is a 588-amino-acid chain: Lamin-B1 (588 aa).

Over residues 1-12 the composition is skewed to polar residues; the sequence is MATATPVQQQRA. A disordered region spans residues 1 to 34; sequence MATATPVQQQRAGSRASAPATPLSPTRLSRLQEK. Position 2 is an N-acetylalanine (Ala-2). The interval 2 to 35 is head; that stretch reads ATATPVQQQRAGSRASAPATPLSPTRLSRLQEKE. Thr-3 and Thr-5 each carry phosphothreonine. An Omega-N-methylarginine modification is found at Arg-15. Ser-17 bears the Phosphoserine mark. Residue Thr-21 is modified to Phosphothreonine. Position 24 is a phosphoserine (Ser-24). The residue at position 26 (Thr-26) is a Phosphothreonine. Phosphoserine is present on Ser-29. The IF rod domain occupies 33–389; it reads EKEELRELND…KLLEGEEERL (357 aa). The tract at residues 36–70 is coil 1A; that stretch reads ELRELNDRLAVYIDKVRSLETENSALQLQVTEREE. The linker 1 stretch occupies residues 71-82; it reads VRGRELTGLKAL. The tract at residues 83–216 is coil 1B; the sequence is YETELADARR…EFRKNMYEEE (134 aa). Lys-103 is covalently cross-linked (Glycyl lysine isopeptide (Lys-Gly) (interchain with G-Cter in SUMO2)). Position 112 is an N6-acetyllysine (Lys-112). Lys-124 is covalently cross-linked (Glycyl lysine isopeptide (Lys-Gly) (interchain with G-Cter in SUMO2)). Ser-127 bears the Phosphoserine mark. Lys-146 is covalently cross-linked (Glycyl lysine isopeptide (Lys-Gly) (interchain with G-Cter in SUMO2)). At Lys-158 the chain carries N6-acetyllysine; alternate. Lys-158 participates in a covalent cross-link: Glycyl lysine isopeptide (Lys-Gly) (interchain with G-Cter in SUMO2); alternate. Ser-159 is subject to Phosphoserine. A Glycyl lysine isopeptide (Lys-Gly) (interchain with G-Cter in SUMO2) cross-link involves residue Lys-182. A phosphoserine mark is found at Ser-201 and Ser-233. Residues 217–244 form a linker 2 region; sequence INETRRKHETRLVEVDSGRQIEYEYKLA. Residues Lys-242 and Lys-262 each participate in a glycyl lysine isopeptide (Lys-Gly) (interchain with G-Cter in SUMO2) cross-link. Residues 245-387 are coil 2; that stretch reads QALHEMREQH…YRKLLEGEEE (143 aa). N6-acetyllysine; alternate is present on Lys-272. Lys-272 is covalently cross-linked (Glycyl lysine isopeptide (Lys-Gly) (interchain with G-Cter in SUMO2); alternate). Ser-279 and Ser-303 each carry phosphoserine. Lys-313 is covalently cross-linked (Glycyl lysine isopeptide (Lys-Gly) (interchain with G-Cter in SUMO2)). An N6-acetyllysine; alternate modification is found at Lys-331. Lys-331 is covalently cross-linked (Glycyl lysine isopeptide (Lys-Gly) (interchain with G-Cter in SUMO2); alternate). Phosphoserine is present on residues Ser-376 and Ser-394. The tail stretch occupies residues 388–588; the sequence is RLKLSPSPSS…RASNKSCAIM (201 aa). The segment covering 391–410 has biased composition (low complexity); the sequence is LSPSPSSRVTVSRASSSRSV. Residues 391 to 433 form a disordered region; that stretch reads LSPSPSSRVTVSRASSSRSVRTTRGKRKRVDVEESEASSSVSI. A glycan (O-linked (GlcNAc) threonine) is linked at Thr-400. At Arg-414 the chain carries Omega-N-methylarginine. A Nuclear localization signal motif is present at residues 416–421; that stretch reads KRKRVD. Positions 431 to 547 constitute an LTD domain; that stretch reads VSISHSASAT…EEVAQRSTVF (117 aa). N6-acetyllysine is present on Lys-484. A Glycyl lysine isopeptide (Lys-Gly) (interchain with G-Cter in SUMO2) cross-link involves residue Lys-533. Ser-535 carries the post-translational modification Phosphoserine. Residue Lys-548 forms a Glycyl lysine isopeptide (Lys-Gly) (interchain with G-Cter in SUMO2) linkage. The residue at position 585 (Cys-585) is a Cysteine methyl ester. Cys-585 carries the S-farnesyl cysteine lipid modification. Positions 586–588 are cleaved as a propeptide — removed in mature form; the sequence is AIM.

The protein belongs to the intermediate filament family. As to quaternary structure, homodimer. Lamin dimers then assemble into dimeric head-to-tail polymers. Ultimately, two head-to-tail polymers assemble laterally into a protofilament with a uniformly shaped rod of 3.5 nm in diameter. Interacts with SPAG4 and SEPT12. In terms of processing, B-type lamins undergo a series of modifications, such as farnesylation and phosphorylation. Increased phosphorylation of the lamins occurs before envelope disintegration and probably plays a role in regulating lamin associations. Phosphorylation plays a key role in lamin organization, subcellular localization and nuclear envelope disintegration. Phosphorylation by CDK1 at Ser-24 and Ser-394 at the onset of mitosis drives lamin disassembly and nuclear envelope breakdown.

The protein resides in the nucleus lamina. Its function is as follows. Lamins are intermediate filament proteins that assemble into a filamentous meshwork, and which constitute the major components of the nuclear lamina, a fibrous layer on the nucleoplasmic side of the inner nuclear membrane. Lamins provide a framework for the nuclear envelope, bridging the nuclear envelope and chromatin, thereby playing an important role in nuclear assembly, chromatin organization, nuclear membrane and telomere dynamics. The structural integrity of the lamina is strictly controlled by the cell cycle, as seen by the disintegration and formation of the nuclear envelope in prophase and telophase, respectively. This is Lamin-B1 (Lmnb1) from Mus musculus (Mouse).